The primary structure comprises 1070 residues: DNA-directed RNA polymerase subunit beta (1070 aa).

The protein belongs to the RNA polymerase beta chain family. In plastids the minimal PEP RNA polymerase catalytic core is composed of four subunits: alpha, beta, beta', and beta''. When a (nuclear-encoded) sigma factor is associated with the core the holoenzyme is formed, which can initiate transcription.

The protein localises to the plastid. It is found in the chloroplast. It catalyses the reaction RNA(n) + a ribonucleoside 5'-triphosphate = RNA(n+1) + diphosphate. DNA-dependent RNA polymerase catalyzes the transcription of DNA into RNA using the four ribonucleoside triphosphates as substrates. The protein is DNA-directed RNA polymerase subunit beta of Chaetosphaeridium globosum (Charophycean green alga).